A 705-amino-acid chain; its full sequence is Polyribonucleotide nucleotidyltransferase (705 aa).

Residues aspartate 486 and aspartate 492 each coordinate Mg(2+). The 60-residue stretch at 553–612 (PRIYKIKINPEKIKDVIGKGGSVIRMLTEKTKSSIEIEDDGTVKVISTDIKNAQCALKKI) folds into the KH domain. Residues 622-690 (NKIYVAKITR…RYGRIRLSFT (69 aa)) form the S1 motif domain.

This sequence belongs to the polyribonucleotide nucleotidyltransferase family. In terms of assembly, component of the RNA degradosome, which is a multiprotein complex involved in RNA processing and mRNA degradation. Requires Mg(2+) as cofactor.

The protein localises to the cytoplasm. The enzyme catalyses RNA(n+1) + phosphate = RNA(n) + a ribonucleoside 5'-diphosphate. Functionally, involved in mRNA degradation. Catalyzes the phosphorolysis of single-stranded polyribonucleotides processively in the 3'- to 5'-direction. The protein is Polyribonucleotide nucleotidyltransferase of Wigglesworthia glossinidia brevipalpis.